A 423-amino-acid polypeptide reads, in one-letter code: Protein MANNAN SYNTHESIS-RELATED 2 (423 aa).

Topologically, residues 1 to 6 are cytoplasmic; it reads MGVDLR. A helical; Signal-anchor for type II membrane protein membrane pass occupies residues 7–26; that stretch reads QVVAGILTITMFVMLGQMLH. Residues 27–423 lie on the Lumenal side of the membrane; it reads RDYFDAVQEK…KNHLAYSCFC (397 aa). Substrate is bound at residue 264-266; sequence DLR.

This sequence belongs to the glycosyltransferase GT106 family. As to expression, widely expressed.

It is found in the golgi apparatus membrane. Its pathway is glycan biosynthesis. Functionally, glycosyltransferase involved in mannan biosynthesis. The sequence is that of Protein MANNAN SYNTHESIS-RELATED 2 from Arabidopsis thaliana (Mouse-ear cress).